The following is an 842-amino-acid chain: Elongation factor 2 (842 aa).

The tr-type G domain maps to 17–253 (TNVRNMSVIA…LWGDSYFNPK (237 aa)). GTP is bound by residues 26 to 33 (AHVDHGKS), 158 to 161 (NKVD), and 213 to 215 (SGL). A Diphthamide modification is found at H699.

The protein belongs to the TRAFAC class translation factor GTPase superfamily. Classic translation factor GTPase family. EF-G/EF-2 subfamily.

It localises to the cytoplasm. It catalyses the reaction GTP + H2O = GDP + phosphate + H(+). Functionally, catalyzes the GTP-dependent ribosomal translocation step during translation elongation. During this step, the ribosome changes from the pre-translocational (PRE) to the post-translocational (POST) state as the newly formed A-site-bound peptidyl-tRNA and P-site-bound deacylated tRNA move to the P and E sites, respectively. Catalyzes the coordinated movement of the two tRNA molecules, the mRNA and conformational changes in the ribosome. This chain is Elongation factor 2 (EFT1), found in Komagataella pastoris (Yeast).